A 369-amino-acid polypeptide reads, in one-letter code: uncharacterized protein (369 aa).

Position 184 is an N6-(pyridoxal phosphate)lysine (K184).

Belongs to the class-V pyridoxal-phosphate-dependent aminotransferase family. Pyridoxal 5'-phosphate serves as cofactor.

This is an uncharacterized protein from Helicobacter pylori (strain ATCC 700392 / 26695) (Campylobacter pylori).